A 377-amino-acid chain; its full sequence is Chaperone protein DnaJ (377 aa).

The J domain occupies 5–69 (EFYDRLGVSK…QKRSAYDQYG (65 aa)). Residues 133-215 (GVEKDVSYHR…CHGTGHEKET (83 aa)) form a CR-type zinc finger. Zn(2+)-binding residues include cysteine 146, cysteine 149, cysteine 163, cysteine 166, cysteine 189, cysteine 192, cysteine 203, and cysteine 206. 4 CXXCXGXG motif repeats span residues 146–153 (CHTCAGSG), 163–170 (CGRCHGSG), 189–196 (CDVCHGSG), and 203–210 (CQTCHGTG).

Belongs to the DnaJ family. Homodimer. It depends on Zn(2+) as a cofactor.

It is found in the cytoplasm. Its function is as follows. Participates actively in the response to hyperosmotic and heat shock by preventing the aggregation of stress-denatured proteins and by disaggregating proteins, also in an autonomous, DnaK-independent fashion. Unfolded proteins bind initially to DnaJ; upon interaction with the DnaJ-bound protein, DnaK hydrolyzes its bound ATP, resulting in the formation of a stable complex. GrpE releases ADP from DnaK; ATP binding to DnaK triggers the release of the substrate protein, thus completing the reaction cycle. Several rounds of ATP-dependent interactions between DnaJ, DnaK and GrpE are required for fully efficient folding. Also involved, together with DnaK and GrpE, in the DNA replication of plasmids through activation of initiation proteins. This Streptococcus uberis (strain ATCC BAA-854 / 0140J) protein is Chaperone protein DnaJ.